A 597-amino-acid chain; its full sequence is Cytosolic Fe-S cluster assembly factor nar1 (597 aa).

Positions 20, 62, 65, 68, 216, and 271 each coordinate [4Fe-4S] cluster. The disordered stretch occupies residues R428–S449. C462 and C466 together coordinate [4Fe-4S] cluster. Positions R479–Q505 are disordered.

The protein belongs to the NARF family.

Its function is as follows. Component of the cytosolic Fe/S protein assembly machinery. Required for maturation of extramitochondrial Fe/S proteins. May play a role in the transfer of pre-assembled Fe/S clusters to target apoproteins. This is Cytosolic Fe-S cluster assembly factor nar1 (nar1) from Aspergillus niger (strain ATCC MYA-4892 / CBS 513.88 / FGSC A1513).